The following is a 472-amino-acid chain: Doublesex- and mab-3-related transcription factor 3 (472 aa).

The DM DNA-binding region spans 29 to 76 (CARCRNHGVLSWLKGHKRYCRFKDCTCEKCILIIERQRVMAAQVALRR). Disordered stretches follow at residues 89–128 (DSLR…AELA) and 155–191 (EERL…GCFT). The span at 95–123 (PGPPPPGDAVAAPQPPPASQPSQPQPPRP) shows a compositional bias: pro residues. Residues 155–179 (EERLGDGKSADNTEVFSDKDTDQRS) are compositionally biased toward basic and acidic residues. The DMA domain occupies 249-284 (RPPLEVLKKIFPNQKPTVLELILKGCGGDLVSAVEV). Residues 430-472 (TEDPRISIPDDGCPFVSKQSIYTEDDYDERSDSSDSRTLNTSS) are disordered.

It belongs to the DMRT family. May homodimerize. As to expression, expressed in testis.

Its subcellular location is the nucleus. In terms of biological role, probable transcription factor that plays a role in configuring the spinal circuits controlling stride in vertebrates. Involved in neuronal specification within specific subdivision of spinal cord neurons and in the development of a coordinated locomotor network controlling limb movements. May regulate transcription during sexual development. The chain is Doublesex- and mab-3-related transcription factor 3 (DMRT3) from Homo sapiens (Human).